The sequence spans 232 residues: Ribosomal RNA large subunit methyltransferase E (232 aa).

S-adenosyl-L-methionine contacts are provided by G64, W66, D97, D113, and D138. K178 (proton acceptor) is an active-site residue.

Belongs to the class I-like SAM-binding methyltransferase superfamily. RNA methyltransferase RlmE family.

It localises to the cytoplasm. It catalyses the reaction uridine(2552) in 23S rRNA + S-adenosyl-L-methionine = 2'-O-methyluridine(2552) in 23S rRNA + S-adenosyl-L-homocysteine + H(+). Its function is as follows. Specifically methylates the uridine in position 2552 of 23S rRNA at the 2'-O position of the ribose in the fully assembled 50S ribosomal subunit. The chain is Ribosomal RNA large subunit methyltransferase E from Leptothrix cholodnii (strain ATCC 51168 / LMG 8142 / SP-6) (Leptothrix discophora (strain SP-6)).